Here is a 397-residue protein sequence, read N- to C-terminus: DNA-directed RNA polymerase subunit Rpo1C (397 aa).

It belongs to the RNA polymerase beta' chain family. As to quaternary structure, part of the RNA polymerase complex. An artificial construct of the RNAP clamp domain (including part of this protein) contacts transcription elongation factors Spt4 and Spt5.

Its subcellular location is the cytoplasm. It catalyses the reaction RNA(n) + a ribonucleoside 5'-triphosphate = RNA(n+1) + diphosphate. Functionally, DNA-dependent RNA polymerase (RNAP) catalyzes the transcription of DNA into RNA using the four ribonucleoside triphosphates as substrates. Forms part of the jaw domain. The polypeptide is DNA-directed RNA polymerase subunit Rpo1C (Pyrococcus furiosus (strain ATCC 43587 / DSM 3638 / JCM 8422 / Vc1)).